A 602-amino-acid polypeptide reads, in one-letter code: Probable translation initiation factor IF-2 (602 aa).

Residues 18–233 enclose the tr-type G domain; the sequence is LRTPIVCVMG…LVGLAQRFLK (216 aa). A G1 region spans residues 27–34; that stretch reads GHVDHGKT. A GTP-binding site is contributed by 27 to 34; sequence GHVDHGKT. Residues 52-56 are G2; that stretch reads AITQH. The interval 88–91 is G3; sequence DTPG. GTP contacts are provided by residues 88-92 and 142-145; these read DTPGH and NKID. A G4 region spans residues 142–145; it reads NKID. A G5 region spans residues 210-212; that stretch reads SAI.

This sequence belongs to the TRAFAC class translation factor GTPase superfamily. Classic translation factor GTPase family. IF-2 subfamily.

Its function is as follows. Function in general translation initiation by promoting the binding of the formylmethionine-tRNA to ribosomes. Seems to function along with eIF-2. In Methanothrix thermoacetophila (strain DSM 6194 / JCM 14653 / NBRC 101360 / PT) (Methanosaeta thermophila), this protein is Probable translation initiation factor IF-2.